The sequence spans 887 residues: Ubiquitin carboxyl-terminal hydrolase 4 (887 aa).

The Rhodanese domain maps to 202 to 328 (KEDSLLLIDV…WIKNGGEIDK (127 aa)). 2 disordered regions span residues 358-465 (AFPD…PKPP) and 484-505 (QKQN…TLIR). Positions 387-402 (TPPNGSSTLGRINSPV) are enriched in polar residues. Positions 525-885 (VGLENMGNSC…SAYVLFYHRI (361 aa)) constitute a USP domain. The Nucleophile role is filled by C534. The active-site Proton acceptor is H842.

This sequence belongs to the peptidase C19 family.

The protein resides in the cytoplasm. Its subcellular location is the late endosome membrane. The catalysed reaction is Thiol-dependent hydrolysis of ester, thioester, amide, peptide and isopeptide bonds formed by the C-terminal Gly of ubiquitin (a 76-residue protein attached to proteins as an intracellular targeting signal).. RFU1 is an inhibitor of deubiquitination activity. Its function is as follows. Ubiquitin thioesterase that acts at the late endosome/prevacuolar compartment to recover ubiquitin from ubiquitinated membrane proteins en route to the vacuole. Also removes ubiquitin from soluble proteins targeted to proteasomes. Is essential to maintain a normal level of free ubiquitin. Required for promoting coordination of DNA replication and avoids DNA overreplication. The protein is Ubiquitin carboxyl-terminal hydrolase 4 (DOA4) of Candida glabrata (strain ATCC 2001 / BCRC 20586 / JCM 3761 / NBRC 0622 / NRRL Y-65 / CBS 138) (Yeast).